Consider the following 462-residue polypeptide: Retinoic acid receptor alpha (462 aa).

The interval 1–87 is modulating; the sequence is MASNSSSCPT…PPPLPRIYKP (87 aa). Polar residues predominate over residues 52-64; that stretch reads GYSTPSPATIETQ. The tract at residues 52–77 is disordered; it reads GYSTPSPATIETQSSSSEEIVPSPPS. Residue Ser-77 is modified to Phosphoserine; by CDK7. 2 NR C4-type zinc fingers span residues 88-108 and 124-148; these read CFVCQDKSSGYHYGVSACEGC and CHRDKNCIINKVTRNRCQYCRLQKC. A DNA-binding region (nuclear receptor) is located at residues 88-153; sequence CFVCQDKSSG…RLQKCFEVGM (66 aa). Ser-96 bears the Phosphoserine; by PKB/AKT1 mark. The segment at 154–182 is hinge; the sequence is SKESVRNDRNKKKKEVPKPECSESYTLTP. Residues Lys-166 and Lys-171 each participate in a glycyl lysine isopeptide (Lys-Gly) (interchain with G-Cter in SUMO) cross-link. The region spanning 183-417 is the NR LBD domain; sequence EVGELIEKVR…PLIQEMLENS (235 aa). Ser-219 bears the Phosphoserine; by PKA mark. Cys-235 provides a ligand contact to all-trans-retinoate. Positions 254–258 match the UBR5-degron motif; that stretch reads IADQI. An all-trans-retinoate-binding site is contributed by Ser-287. Ser-369 is subject to Phosphoserine; by PKA. Lys-399 is covalently cross-linked (Glycyl lysine isopeptide (Lys-Gly) (interchain with G-Cter in SUMO)). Residues 404–419 form a required for binding corepressor NCOR1 region; the sequence is GSMPPLIQEMLENSEG. The 9aaTAD signature appears at 408–416; that stretch reads PLIQEMLEN. A disordered region spans residues 419 to 462; it reads GLDTLSGQPGGGGRDGGGLAPPPGSCSPSLSPSSNRSSPATHSP. A compositionally biased stretch (gly residues) spans 426 to 437; that stretch reads QPGGGGRDGGGL. The segment covering 444-462 has biased composition (low complexity); that stretch reads CSPSLSPSSNRSSPATHSP.

The protein belongs to the nuclear hormone receptor family. NR1 subfamily. Heterodimer; with RXRA (via C-terminus); association with RXRA is enhanced by pulsatile shear stress. Binds DNA preferentially as a heterodimer. RXRA serves as enhancer to induce RARA binding to RARE. Interacts with RXRG. Interacts with coactivators NCOA3 and NCOA6. Interacts with NCOA7; the interaction requires ligand-binding. Interacts (via the ligand-binding domain) with PRAME; the interaction is ligand (retinoic acid)-dependent. Interacts with AKT1; the interaction phosphorylates RARA and represses transactivation. Interacts with PRKAR1A; the interaction negatively regulates RARA transcriptional activity. Interacts with NCOR1 and NCOR2. Interacts with PRMT2. Interacts with LRIF1. Interacts with ASXL1 and NCOA1. Interacts with ACTN4. In a complex with HDAC3, HDAC5 and HDAC7; the HDACs serve as corepressors of RARA, causing its deacetylation and inhibition of RARE DNA element binding; association with HDAC3, HDAC5 and HDAC7 is increased upon oscillatory shear stress. Interacts with CDK7. In the absence of hormonal ligand, interacts with TACC1. In terms of processing, phosphorylated on serine and threonine residues. Phosphorylation does not change during cell cycle. Phosphorylation on Ser-77 is crucial for transcriptional activity. Phosphorylation by AKT1 is required for the repressor activity but has no effect on DNA binding, protein stability nor subcellular localization. Phosphorylated by PKA in vitro. This phosphorylation on Ser-219 and Ser-369 is critical for ligand binding, nuclear localization and transcriptional activity in response to FSH signaling. Sumoylated with SUMO2, mainly on Lys-399 which is also required for SENP6 binding. On all-trans retinoic acid (ATRA) binding, a conformational change may occur that allows sumoylation on two additional site, Lys-166 and Lys-171. Probably desumoylated by SENP6. Sumoylation levels determine nuclear localization and regulate ATRA-mediated transcriptional activity. Post-translationally, trimethylation enhances heterodimerization with RXRA and positively modulates the transcriptional activation. In terms of processing, ubiquitinated by UBR5, leading to its degradation: UBR5 specifically recognizes and binds ligand-bound RARA when it is not associated with coactivators (NCOAs). In presence of NCOAs, the UBR5-degron is not accessible, preventing its ubiquitination and degradation. Acetylated; acetylation is increased upon pulsatile shear stress and decreased upon oscillatory shear stress. Expressed in monocytes.

It localises to the nucleus. Its subcellular location is the cytoplasm. Receptor for retinoic acid. Retinoic acid receptors bind as heterodimers to their target response elements in response to their ligands, all-trans or 9-cis retinoic acid, and regulate gene expression in various biological processes. The RXR/RAR heterodimers bind to the retinoic acid response elements (RARE) composed of tandem 5'-AGGTCA-3' sites known as DR1-DR5. In the absence of ligand, the RXR-RAR heterodimers associate with a multiprotein complex containing transcription corepressors that induce histone deacetylation, chromatin condensation and transcriptional suppression. On ligand binding, the corepressors dissociate from the receptors and associate with the coactivators leading to transcriptional activation. Formation of a complex with histone deacetylases might lead to inhibition of RARE DNA element binding and to transcriptional repression. Transcriptional activation and RARE DNA element binding might be supported by the transcription factor KLF2. RARA plays an essential role in the regulation of retinoic acid-induced germ cell development during spermatogenesis. Has a role in the survival of early spermatocytes at the beginning prophase of meiosis. In Sertoli cells, may promote the survival and development of early meiotic prophase spermatocytes. In concert with RARG, required for skeletal growth, matrix homeostasis and growth plate function. Together with RXRA, positively regulates microRNA-10a expression, thereby inhibiting the GATA6/VCAM1 signaling response to pulsatile shear stress in vascular endothelial cells. In association with HDAC3, HDAC5 and HDAC7 corepressors, plays a role in the repression of microRNA-10a and thereby promotes the inflammatory response. This chain is Retinoic acid receptor alpha (RARA), found in Homo sapiens (Human).